A 274-amino-acid polypeptide reads, in one-letter code: Large ribosomal subunit protein uL2cz/uL2cy (274 aa).

2 disordered regions span residues 1-21 (MAIHLYKTSTPGTRNGAVDSQ) and 225-274 (PVDH…RRSK).

It belongs to the universal ribosomal protein uL2 family. As to quaternary structure, part of the 50S ribosomal subunit.

The protein resides in the plastid. It localises to the chloroplast. This chain is Large ribosomal subunit protein uL2cz/uL2cy (rpl2-A), found in Gossypium barbadense (Sea Island cotton).